Consider the following 354-residue polypeptide: Rhodopsin (354 aa).

At 1 to 36 the chain is on the extracellular side; sequence MNGTEGPNFYIPMSNKTGVVRSPFDYPQYYLAEPWK. N2 carries an N-linked (GlcNAc...) (hybrid) asparagine glycan. Residue N15 is glycosylated (N-linked (GlcNAc...) asparagine). The helical transmembrane segment at 37 to 61 threads the bilayer; the sequence is YSVLAAYMFLLILLGLPINFMTLYV. Topologically, residues 62–73 are cytoplasmic; the sequence is TIQHKKLRTPLN. A helical transmembrane segment spans residues 74–96; that stretch reads YILLNLGVCNHFMVLCGFTITMY. Residues 97–110 are Extracellular-facing; that stretch reads TSLHGYFVFGQTGC. Residues C110 and C187 are joined by a disulfide bond. The helical transmembrane segment at 111-133 threads the bilayer; that stretch reads YFEGFFATLGGEIALWSLVVLAI. The 'Ionic lock' involved in activated form stabilization signature appears at 134 to 136; sequence ERY. Residues 134–152 lie on the Cytoplasmic side of the membrane; sequence ERYIVVCKPMSNFRFGENH. A helical membrane pass occupies residues 153-173; sequence AMMGVAFTWIMALACAVPPLF. Residues 174–202 are Extracellular-facing; sequence GWSRYIPEGMQCSCGVDYYTLKPEVNNES. The helical transmembrane segment at 203–224 threads the bilayer; the sequence is FVIYMFVVHFLIPLIIISFCYG. Residues 225–252 lie on the Cytoplasmic side of the membrane; the sequence is RLVCTVKEAAAQQQESATTQKAEKEVTR. Residues 253-274 form a helical membrane-spanning segment; it reads MVIIMVIFFLICWVPYAYVAFY. At 275–286 the chain is on the extracellular side; the sequence is IFTHQGSEFGPI. A helical transmembrane segment spans residues 287 to 308; sequence FMTVPAFFAKSSAIYNPVIYIM. K296 bears the N6-(retinylidene)lysine mark. Topologically, residues 309-354 are cytoplasmic; that stretch reads LNKQFRNCMITTLCCGKNPFGDDDASSAATSKTEATSVSTSQVSPA. 2 S-palmitoyl cysteine lipidation sites follow: C322 and C323. Residues 332–354 form a disordered region; sequence DASSAATSKTEATSVSTSQVSPA. The segment covering 334–354 has biased composition (low complexity); that stretch reads SSAATSKTEATSVSTSQVSPA.

The protein belongs to the G-protein coupled receptor 1 family. Opsin subfamily. Post-translationally, contains one covalently linked retinal chromophore. Upon light absorption, the covalently bound 11-cis-retinal is converted to all-trans-retinal. After hydrolysis of the Schiff base and release of the covalently bound all-trans-retinal, active rhodopsin is regenerated by binding of a fresh molecule of 11-cis-retinal. In terms of tissue distribution, detected in retina rod photoreceptor cell outer segments (at protein level). Detected in retina.

The protein resides in the membrane. It is found in the cell projection. The protein localises to the cilium. Its subcellular location is the photoreceptor outer segment. Functionally, photoreceptor required for image-forming vision at low light intensity. Required for photoreceptor cell viability after birth. Light-induced isomerization of 11-cis to all-trans retinal triggers a conformational change that activates signaling via G-proteins. Subsequent receptor phosphorylation mediates displacement of the bound G-protein alpha subunit by arrestin and terminates signaling. In Lithobates pipiens (Northern leopard frog), this protein is Rhodopsin (RHO).